The primary structure comprises 470 residues: L-fuculokinase (470 aa).

It belongs to the FGGY kinase family. A divalent metal cation is required as a cofactor.

The catalysed reaction is L-fuculose + ATP = L-fuculose 1-phosphate + ADP + H(+). It functions in the pathway carbohydrate degradation; L-fucose degradation; L-lactaldehyde and glycerone phosphate from L-fucose: step 2/3. Its function is as follows. Catalyzes the phosphorylation of L-fuculose. This chain is L-fuculokinase, found in Haemophilus influenzae (strain ATCC 51907 / DSM 11121 / KW20 / Rd).